The primary structure comprises 67 residues: ATP synthase F(0) complex subunit 8 (67 aa).

The helical transmembrane segment at 8–24 threads the bilayer; that stretch reads TWSITIMSMIMTLFIVF. Position 54 is an N6-acetyllysine; alternate (lysine 54). An N6-succinyllysine; alternate modification is found at lysine 54. Residue lysine 57 is modified to N6-acetyllysine.

It belongs to the ATPase protein 8 family. As to quaternary structure, component of the ATP synthase complex composed at least of ATP5F1A/subunit alpha, ATP5F1B/subunit beta, ATP5MC1/subunit c (homooctomer), MT-ATP6/subunit a, MT-ATP8/subunit 8, ATP5ME/subunit e, ATP5MF/subunit f, ATP5MG/subunit g, ATP5MK/subunit k, ATP5MJ/subunit j, ATP5F1C/subunit gamma, ATP5F1D/subunit delta, ATP5F1E/subunit epsilon, ATP5PF/subunit F6, ATP5PB/subunit b, ATP5PD/subunit d, ATP5PO/subunit OSCP. ATP synthase complex consists of a soluble F(1) head domain (subunits alpha(3) and beta(3)) - the catalytic core - and a membrane F(0) domain - the membrane proton channel (subunits c, a, 8, e, f, g, k and j). These two domains are linked by a central stalk (subunits gamma, delta, and epsilon) rotating inside the F1 region and a stationary peripheral stalk (subunits F6, b, d, and OSCP). Interacts with PRICKLE3.

Its subcellular location is the mitochondrion membrane. Its function is as follows. Subunit 8, of the mitochondrial membrane ATP synthase complex (F(1)F(0) ATP synthase or Complex V) that produces ATP from ADP in the presence of a proton gradient across the membrane which is generated by electron transport complexes of the respiratory chain. ATP synthase complex consist of a soluble F(1) head domain - the catalytic core - and a membrane F(1) domain - the membrane proton channel. These two domains are linked by a central stalk rotating inside the F(1) region and a stationary peripheral stalk. During catalysis, ATP synthesis in the catalytic domain of F(1) is coupled via a rotary mechanism of the central stalk subunits to proton translocation. In vivo, can only synthesize ATP although its ATP hydrolase activity can be activated artificially in vitro. Part of the complex F(0) domain. In Felis catus (Cat), this protein is ATP synthase F(0) complex subunit 8.